An 892-amino-acid chain; its full sequence is DNA mismatch repair protein MutS (892 aa).

607 to 614 (GPNMSGKS) provides a ligand contact to ATP. The segment at 833-854 (EESQLSFFGGEQSPKKQDKPVL) is disordered. Residues 845 to 854 (SPKKQDKPVL) show a composition bias toward basic and acidic residues.

This sequence belongs to the DNA mismatch repair MutS family.

This protein is involved in the repair of mismatches in DNA. It is possible that it carries out the mismatch recognition step. This protein has a weak ATPase activity. The sequence is that of DNA mismatch repair protein MutS from Bacillus cereus (strain Q1).